The following is a 210-amino-acid chain: Putative truncated L-serine dehydratase SDL1 (210 aa).

It belongs to the serine/threonine dehydratase family. Requires pyridoxal 5'-phosphate as cofactor.

The protein resides in the cytoplasm. The enzyme catalyses L-serine = pyruvate + NH4(+). Its pathway is carbohydrate biosynthesis; gluconeogenesis. The protein is Putative truncated L-serine dehydratase SDL1 (SDL1) of Saccharomyces cerevisiae (strain ATCC 204508 / S288c) (Baker's yeast).